The sequence spans 257 residues: Imidazole glycerol phosphate synthase subunit HisF (257 aa).

Catalysis depends on residues Asp12 and Asp131.

This sequence belongs to the HisA/HisF family. As to quaternary structure, heterodimer of HisH and HisF.

It localises to the cytoplasm. It catalyses the reaction 5-[(5-phospho-1-deoxy-D-ribulos-1-ylimino)methylamino]-1-(5-phospho-beta-D-ribosyl)imidazole-4-carboxamide + L-glutamine = D-erythro-1-(imidazol-4-yl)glycerol 3-phosphate + 5-amino-1-(5-phospho-beta-D-ribosyl)imidazole-4-carboxamide + L-glutamate + H(+). It functions in the pathway amino-acid biosynthesis; L-histidine biosynthesis; L-histidine from 5-phospho-alpha-D-ribose 1-diphosphate: step 5/9. In terms of biological role, IGPS catalyzes the conversion of PRFAR and glutamine to IGP, AICAR and glutamate. The HisF subunit catalyzes the cyclization activity that produces IGP and AICAR from PRFAR using the ammonia provided by the HisH subunit. The protein is Imidazole glycerol phosphate synthase subunit HisF of Burkholderia thailandensis (strain ATCC 700388 / DSM 13276 / CCUG 48851 / CIP 106301 / E264).